The chain runs to 149 residues: L-alanine exporter AlaE (149 aa).

The next 4 helical transmembrane spans lie at 16–36 (FAMV…LSGM), 46–66 (LVAI…RDAI), 85–105 (VLAY…TVGA), and 112–132 (AAVS…GYFL).

This sequence belongs to the AlaE exporter family.

The protein localises to the cell inner membrane. Exports L-alanine. This chain is L-alanine exporter AlaE, found in Citrobacter koseri (strain ATCC BAA-895 / CDC 4225-83 / SGSC4696).